We begin with the raw amino-acid sequence, 198 residues long: Putative 3-methyladenine DNA glycosylase (198 aa).

The protein belongs to the DNA glycosylase MPG family.

This Rhizobium johnstonii (strain DSM 114642 / LMG 32736 / 3841) (Rhizobium leguminosarum bv. viciae) protein is Putative 3-methyladenine DNA glycosylase.